Here is a 765-residue protein sequence, read N- to C-terminus: 5-methyltetrahydropteroyltriglutamate--homocysteine methyltransferase (765 aa).

5-methyltetrahydropteroyltri-L-glutamate is bound by residues 18–21 (REWK) and Lys-114. L-homocysteine contacts are provided by residues 437–439 (IGS) and Glu-490. L-methionine-binding positions include 437 to 439 (IGS) and Glu-490. Trp-567 contributes to the 5-methyltetrahydropteroyltri-L-glutamate binding site. Asp-605 contributes to the L-homocysteine binding site. Position 605 (Asp-605) interacts with L-methionine. Glu-611 serves as a coordination point for 5-methyltetrahydropteroyltri-L-glutamate. The Zn(2+) site is built by His-647, Cys-649, and Glu-671. His-700 acts as the Proton donor in catalysis. Residue Cys-732 coordinates Zn(2+).

Belongs to the vitamin-B12 independent methionine synthase family. It depends on Zn(2+) as a cofactor.

It carries out the reaction 5-methyltetrahydropteroyltri-L-glutamate + L-homocysteine = tetrahydropteroyltri-L-glutamate + L-methionine. Its pathway is amino-acid biosynthesis; L-methionine biosynthesis via de novo pathway; L-methionine from L-homocysteine (MetE route): step 1/1. Its function is as follows. Catalyzes the transfer of a methyl group from 5-methyltetrahydrofolate to homocysteine resulting in methionine formation. The protein is 5-methyltetrahydropteroyltriglutamate--homocysteine methyltransferase of Listeria monocytogenes serotype 4b (strain F2365).